Consider the following 322-residue polypeptide: Pyridoxal kinase (322 aa).

At Met-1 the chain carries N-acetylmethionine. Pyridoxal-binding residues include Ser-22 and Thr-57. Position 57 (Thr-57) interacts with pyridoxal 5'-phosphate. Ser-69 carries the post-translational modification Phosphoserine. Asp-123 contacts ATP. Asp-123 contacts Na(+). Mg(2+) is bound at residue Asp-128. A Na(+)-binding site is contributed by Thr-158. 160–163 contacts ATP; it reads NQFE. At Ser-174 the chain carries Phosphoserine. Thr-196 serves as a coordination point for Na(+). 196–197 provides a ligand contact to ATP; sequence TS. Ser-223 carries the post-translational modification Phosphoserine. Residues 236–238 and Thr-243 each bind ATP; that span reads VDA. 244 to 245 provides a ligand contact to pyridoxal 5'-phosphate; that stretch reads GD. The active-site Proton acceptor is Asp-245. Position 295 is a phosphoserine (Ser-295).

This sequence belongs to the pyridoxine kinase family. Homodimer. Zn(2+) is required as a cofactor. The cofactor is Mg(2+). Post-translationally, the N-terminus is blocked.

Its subcellular location is the cytoplasm. The protein resides in the cytosol. It carries out the reaction pyridoxal + ATP = pyridoxal 5'-phosphate + ADP + H(+). The catalysed reaction is pyridoxamine + ATP = pyridoxamine 5'-phosphate + ADP + H(+). It catalyses the reaction pyridoxine + ATP = pyridoxine 5'-phosphate + ADP + H(+). It participates in cofactor metabolism; pyridoxal 5'-phosphate salvage; pyridoxal 5'-phosphate from pyridoxal: step 1/1. It functions in the pathway cofactor metabolism; pyridoxal 5'-phosphate salvage; pyridoxine 5'-phosphate from pyridoxine: step 1/1. The protein operates within cofactor metabolism; pyridoxal 5'-phosphate salvage; pyridoxamine 5'-phosphate from pyridoxamine: step 1/1. Its activity is regulated as follows. Activity is increased in the presence of K(+)or Na(+). Its function is as follows. Catalyzes the phosphorylation of the dietary vitamin B6 vitamers pyridoxal (PL), pyridoxine (PN) and pyridoxamine (PM) to form pyridoxal 5'-phosphate (PLP), pyridoxine 5'-phosphate (PNP) and pyridoxamine 5'-phosphate (PMP), respectively. PLP is the active form of vitamin B6, and acts as a cofactor for over 140 different enzymatic reactions. The protein is Pyridoxal kinase (PDXK) of Sus scrofa (Pig).